The chain runs to 122 residues: Large ribosomal subunit protein uL14 (122 aa).

The protein belongs to the universal ribosomal protein uL14 family. Part of the 50S ribosomal subunit. Forms a cluster with proteins L3 and L19. In the 70S ribosome, L14 and L19 interact and together make contacts with the 16S rRNA in bridges B5 and B8.

In terms of biological role, binds to 23S rRNA. Forms part of two intersubunit bridges in the 70S ribosome. The protein is Large ribosomal subunit protein uL14 of Acaryochloris marina (strain MBIC 11017).